Reading from the N-terminus, the 2333-residue chain is Genome polyprotein (2333 aa).

The Peptidase C28 domain occupies M1–K201. Residues M1 to L1481 lie on the Cytoplasmic side of the membrane. Residues C51, H148, and D163 each act as for leader protease activity in the active site. Disordered regions lie at residues K199–N218 and Q238–N265. G202 is lipidated: N-myristoyl glycine; by host. Composition is skewed to polar residues over residues G204–N218 and Q238–G251. Residues S252 to N265 show a composition bias toward low complexity. The tract at residues A789 to Y797 is antigenic epitope. The short motif at R869–D871 is the Cell attachment site element. In terms of domain architecture, SF3 helicase spans N1190–D1354. Position 1218 to 1225 (G1218 to S1225) interacts with ATP. Residues K1482–I1502 lie within the membrane without spanning it. Topologically, residues R1503–A2333 are cytoplasmic. The disordered stretch occupies residues N1562–Q1589. Residues Y1582, Y1605, and Y1629 each carry the O-(5'-phospho-RNA)-tyrosine modification. The Peptidase C3 domain maps to A1653–L1849. The active-site For protease 3C activity; Proton donor/acceptor is H1696. Residues D1734 and C1813 each act as for protease 3C activity in the active site. The short motif at M1879 to T1887 is the Nuclear localization signal element. In terms of domain architecture, RdRp catalytic spans R2097–A2215. G2200 acts as the For RdRp activity in catalysis.

It belongs to the picornaviruses polyprotein family. In terms of assembly, interacts with host ISG15. As to quaternary structure, interacts (via R-G-D motif) with host ITGAV/ITGB6. Interacts with host MAVS; this interaction inhibits binding of host TRAF3 to MAVS, thereby suppressing interferon-mediated responses. Forms homooligomers. In terms of assembly, homohexamer. Interacts with host VIM. Interacts with host BECN1. As to quaternary structure, interacts with host DCTN3. Interacts with RNA-dependent RNA polymerase; this interaction allows 3B-1 to binds 2 polymerases and act as a primer. It also allows the recruitment of the RNA-dependent RNA polymerase to host membranes. In terms of assembly, interacts with RNA-dependent RNA polymerase; this interaction allows 3B-2 to act as a primer. As to quaternary structure, interacts with RNA-dependent RNA polymerase; this interaction allows 3B-3 to act as a primer. Interacts with 3B-1; this interaction allows 3B-1 to binds 2 polymerases and act as a primer. It also allows the recruitment of the RNA-dependent RNA polymerase to host membranes. Interacts with 3B-2; this interaction allows 3B-2 to act as a primer. Interacts with 3B-3; this interaction allows 3B-3 to act as a primer. Removes six residues from its own C-terminus, generating sLb(pro). Post-translationally, specific enzymatic cleavages in vivo by the viral proteases yield a variety of precursors and mature proteins. The polyprotein seems to be cotranslationally cleaved at the 2A/2B junction by a ribosomal skip from one codon to the next without formation of a peptide bond. This process would release the L-P1-2A peptide from the translational complex. In terms of processing, during virion maturation, immature virions are rendered infectious following cleavage of VP0 into VP4 and VP2. This maturation seems to be an autocatalytic event triggered by the presence of RNA in the capsid and is followed by a conformational change of the particle. Myristoylation is required during RNA encapsidation and formation of the mature virus particle. Post-translationally, uridylylated by the polymerase and covalently linked to the 5'-end of genomic RNA. These uridylylated forms act as a nucleotide-peptide primer for the polymerase.

It is found in the host nucleus. It localises to the host cytoplasm. The protein resides in the virion. Its subcellular location is the host endoplasmic reticulum membrane. The protein localises to the host cytoplasmic vesicle membrane. The catalysed reaction is Autocatalytically cleaves itself from the polyprotein of the foot-and-mouth disease virus by hydrolysis of a Lys-|-Gly bond, but then cleaves host cell initiation factor eIF-4G at bonds -Gly-|-Arg- and -Lys-|-Arg-.. It catalyses the reaction a ribonucleoside 5'-triphosphate + H2O = a ribonucleoside 5'-diphosphate + phosphate + H(+). It carries out the reaction RNA(n) + a ribonucleoside 5'-triphosphate = RNA(n+1) + diphosphate. The enzyme catalyses Selective cleavage of Gln-|-Gly bond in the poliovirus polyprotein. In other picornavirus reactions Glu may be substituted for Gln, and Ser or Thr for Gly.. Autocatalytically cleaves itself from the polyprotein at the L/VP0 junction. Also cleaves the host translation initiation factors EIF4G1 and EIF4G3, in order to shut off the capped cellular mRNA transcription. Plays a role in counteracting host innate antiviral response using diverse mechanisms. Possesses a deubiquitinase activity acting on both 'Lys-48' and 'Lys-63'-linked polyubiquitin chains. In turn, inhibits the ubiquitination and subsequent activation of key signaling molecules of type I IFN response such as host RIGI, TBK1, TRAF3 and TRAF6. Inhibits host NF-kappa-B activity by inducing a decrease in RELA mRNA levels. Cleaves a peptide bond in the C-terminus of host ISG15, resulting in the damaging of this modifier that can no longer be attached to target proteins. Also cleaves host G3BP1 and G3BP2 in order to inhibit cytoplasmic stress granules assembly. Its function is as follows. Lies on the inner surface of the capsid shell. After binding to the host receptor, the capsid undergoes conformational changes. Capsid protein VP4 is released, capsid protein VP1 N-terminus is externalized, and together, they shape a pore in the host membrane through which the viral genome is translocated into the host cell cytoplasm. After genome has been released, the channel shrinks. Functionally, forms an icosahedral capsid of pseudo T=3 symmetry with capsid proteins VP1 and VP3. The capsid is composed of 60 copies of each capsid protein organized in the form of twelve pentamers and encloses the viral positive strand RNA genome. Upon acidifcation in the endosome, dissociates into pentamers. In terms of biological role, forms an icosahedral capsid of pseudo T=3 symmetry with capsid proteins VP0 and VP3. The capsid is composed of 60 copies of each capsid protein organized in the form of twelve pentamers and encloses the viral positive strand RNA genome. Upon acidifcation in the endosome, dissociates into pentamers. Forms an icosahedral capsid of pseudo T=3 symmetry with capsid proteins VP2 and VP3. The capsid is composed of 60 copies of each capsid protein organized in the form of twelve pentamers and encloses the viral positive strand RNA genome. Mediates cell entry by attachment to an integrin receptor, usually host ITGAV/ITGB6. In addition, targets host MAVS to suppress type I IFN pathway. Upon acidifcation in the endosome, dissociates into pentamers. Its function is as follows. Mediates self-processing of the polyprotein by a translational effect termed 'ribosome skipping'. Mechanistically, 2A-mediated cleavage occurs between the C-terminal glycine and the proline of the downstream protein 2B. In the case of foot-and-mouth disease virus, the 2A oligopeptide is post-translationally 'trimmed' from the C-terminus of the upstream protein 1D by 3C proteinase. Functionally, plays an essential role in the virus replication cycle by acting as a viroporin. Creates a pore in the host endoplasmic reticulum and as a consequence releases Ca2+ in the cytoplasm of infected cell. In turn, high levels of cytoplasmic calcium may trigger membrane trafficking and transport of viral ER-associated proteins to viroplasms, sites of viral genome replication. In terms of biological role, associates with and induces structural rearrangements of intracellular membranes. Triggers host autophagy by interacting with host BECN1 and thereby promotes viral replication. Participates in viral replication and interacts with host DHX9. Displays RNA-binding, nucleotide binding and NTPase activities. May play a role in virion morphogenesis and viral RNA encapsidation by interacting with the capsid protein VP3. Plays important roles in virus replication, virulence and host range. Its function is as follows. Covalently linked to the 5'-end of both the positive-strand and negative-strand genomic RNAs. Acts as a genome-linked replication primer. Functionally, cysteine protease that generates mature viral proteins from the precursor polyprotein. In addition to its proteolytic activity, binds to viral RNA and thus influences viral genome replication. RNA and substrate bind cooperatively to the protease. In terms of biological role, RNA-directed RNA polymerase 3D-POL replicates genomic and antigenomic RNA by recognizing replications specific signals. Covalently attaches UMP to a tyrosine of VPg, which is used to prime RNA synthesis. The positive stranded RNA genome is first replicated at virus induced membranous vesicles, creating a dsRNA genomic replication form. This dsRNA is then used as template to synthesize positive stranded RNA genomes. ss(+)RNA genomes are either translated, replicated or encapsidated. The sequence is that of Genome polyprotein from Foot-and-mouth disease virus (isolate Bovine/United Kingdom/A12Valle119/1932 serotype A) (FMDV).